A 393-amino-acid chain; its full sequence is Lipid-A-disaccharide synthase (393 aa).

Belongs to the LpxB family.

The enzyme catalyses a lipid X + a UDP-2-N,3-O-bis[(3R)-3-hydroxyacyl]-alpha-D-glucosamine = a lipid A disaccharide + UDP + H(+). Its pathway is bacterial outer membrane biogenesis; LPS lipid A biosynthesis. Its function is as follows. Condensation of UDP-2,3-diacylglucosamine and 2,3-diacylglucosamine-1-phosphate to form lipid A disaccharide, a precursor of lipid A, a phosphorylated glycolipid that anchors the lipopolysaccharide to the outer membrane of the cell. The sequence is that of Lipid-A-disaccharide synthase from Bordetella petrii (strain ATCC BAA-461 / DSM 12804 / CCUG 43448).